The primary structure comprises 423 residues: uncharacterized protein (423 aa).

This is an uncharacterized protein from Pasteurella multocida (strain Pm70).